The following is a 268-amino-acid chain: Octanoyltransferase (268 aa).

Residues 47-243 (PETPDQVWLV…ALCEVLAAHE (197 aa)) enclose the BPL/LPL catalytic domain. Substrate-binding positions include 87 to 94 (RGGQITYH), 159 to 161 (ALG), and 172 to 174 (GVS). Catalysis depends on C190, which acts as the Acyl-thioester intermediate.

It belongs to the LipB family.

It is found in the cytoplasm. It catalyses the reaction octanoyl-[ACP] + L-lysyl-[protein] = N(6)-octanoyl-L-lysyl-[protein] + holo-[ACP] + H(+). Its pathway is protein modification; protein lipoylation via endogenous pathway; protein N(6)-(lipoyl)lysine from octanoyl-[acyl-carrier-protein]: step 1/2. Its function is as follows. Catalyzes the transfer of endogenously produced octanoic acid from octanoyl-acyl-carrier-protein onto the lipoyl domains of lipoate-dependent enzymes. Lipoyl-ACP can also act as a substrate although octanoyl-ACP is likely to be the physiological substrate. The protein is Octanoyltransferase of Cupriavidus necator (strain ATCC 17699 / DSM 428 / KCTC 22496 / NCIMB 10442 / H16 / Stanier 337) (Ralstonia eutropha).